Here is a 101-residue protein sequence, read N- to C-terminus: Cilia- and flagella-associated protein 141 (101 aa).

Microtubule inner protein component of sperm flagellar doublet microtubules.

It is found in the cytoplasm. The protein localises to the cytoskeleton. Its subcellular location is the cilium axoneme. It localises to the flagellum axoneme. Functionally, microtubule inner protein (MIP) part of the dynein-decorated doublet microtubules (DMTs) in cilia axoneme, which is required for motile cilia beating. This is Cilia- and flagella-associated protein 141 from Mus musculus (Mouse).